The primary structure comprises 636 residues: Leucine-rich repeat and fibronectin type-III domain-containing protein 4 (636 aa).

The signal sequence occupies residues 1–16 (MAPPLLLLLLASGAAA). In terms of domain architecture, LRRNT spans 17 to 48 (CPLPCVCQNLSESLSTLCAHRGLLFVPPNVDR). At 17 to 518 (CPLPCVCQNL…LQAHVLGGTL (502 aa)) the chain is on the extracellular side. N-linked (GlcNAc...) asparagine glycosylation is found at Asn-25 and Asn-70. 7 LRR repeats span residues 49–70 (RTVE…DFRN), 73–94 (GLVD…SFGD), 97–118 (SLRS…SLRG), 121–142 (NLQH…AFDD), 146–169 (SLED…GSMP), 170–191 (ALHT…VFAQ), and 194–215 (QLSR…PLFS). The region spanning 234–280 (NPLHCNCELLWLRRLARPDDLETCASPPTLAGRYFWAVPEGEFSCEP) is the LRRCT domain. One can recognise an Ig-like domain in the interval 281–367 (PLIARHTQRL…GEATARVELR (87 aa)). An intrachain disulfide couples Cys-302 to Cys-351. N-linked (GlcNAc...) asparagine glycans are attached at residues Asn-324, Asn-333, Asn-376, and Asn-440. One can recognise a Fibronectin type-III domain in the interval 405–502 (SEPAVQVTEV…GCAHFSTLPA (98 aa)). Residues 519–539 (TVAVGGVLVAALLVFTVALLV) traverse the membrane as a helical segment. The Cytoplasmic portion of the chain corresponds to 540–636 (RGRGAGNGRL…SAERLEESVV (97 aa)). The tract at residues 556–585 (VQSQTNGGTSPMPKSHPPRSPPPRPQRSCS) is disordered. Residues 569 to 580 (KSHPPRSPPPRP) are compositionally biased toward pro residues. Residues Ser-585 and Ser-627 each carry the phosphoserine modification. Residues 633–636 (ESVV) carry the PDZ-binding motif.

The protein belongs to the LRFN family. As to quaternary structure, can form heteromeric complexes with LRFN1, LRFN2, LRFN3 and LRFN5. Unable to form homophilic interactions across cell junctions. Interacts with DLG1, DLG2 and DLG3. Also interacts with DLG4. In terms of processing, glycosylated. As to expression, expressed in brain and testis. In the brain, weak, but broad expression in the cerebral cortex and diencephalic nuclei. Also detected in other parts of the central nervous system, including the olfactory bulb, pons, cerebellum, and medulla oblongata, as well as in the peripheral nervous system, such as the ganglia of cranial nerves and the dorsal root ganglion during gestation.

The protein localises to the membrane. In terms of biological role, promotes neurite outgrowth in hippocampal neurons. May play a role in redistributing DLG4 to the cell periphery. The sequence is that of Leucine-rich repeat and fibronectin type-III domain-containing protein 4 (Lrfn4) from Mus musculus (Mouse).